A 516-amino-acid chain; its full sequence is Apolipoprotein N-acyltransferase (516 aa).

Transmembrane regions (helical) follow at residues 23–43, 68–88, 94–114, 135–155, and 178–198; these read ILILLLAAALAGAFTLFAFAP, AFWLGYAWGLGAYVSNFRWIY, VAGLPAWIAAPLVLLLPAYLA, WLLAFPAAWELGEWLRGWVMT, and LGGIHLVNYLVALSAAALAML. One can recognise a CN hydrolase domain in the interval 241 to 481; it reads AQGNIAQELK…VLTGFAQSRQ (241 aa). The active-site Proton acceptor is E279. K339 is a catalytic residue. C391 serves as the catalytic Nucleophile. A helical membrane pass occupies residues 489 to 509; it reads FGNLPVVLGCGALLLLALLLG.

This sequence belongs to the CN hydrolase family. Apolipoprotein N-acyltransferase subfamily.

The protein resides in the cell inner membrane. The catalysed reaction is N-terminal S-1,2-diacyl-sn-glyceryl-L-cysteinyl-[lipoprotein] + a glycerophospholipid = N-acyl-S-1,2-diacyl-sn-glyceryl-L-cysteinyl-[lipoprotein] + a 2-acyl-sn-glycero-3-phospholipid + H(+). Its pathway is protein modification; lipoprotein biosynthesis (N-acyl transfer). Functionally, catalyzes the phospholipid dependent N-acylation of the N-terminal cysteine of apolipoprotein, the last step in lipoprotein maturation. The chain is Apolipoprotein N-acyltransferase from Chromobacterium violaceum (strain ATCC 12472 / DSM 30191 / JCM 1249 / CCUG 213 / NBRC 12614 / NCIMB 9131 / NCTC 9757 / MK).